Consider the following 402-residue polypeptide: Cholinephosphotransferase 1 (402 aa).

The Cytoplasmic portion of the chain corresponds to M1 to A62. A helical transmembrane segment spans residues P63–C83. CDP-choline is bound at residue N64. The Lumenal segment spans residues Y84 to P93. A helical membrane pass occupies residues F94–A118. Mg(2+) contacts are provided by D111 and D114. R119 lines the CDP-choline pocket. The Cytoplasmic segment spans residues R119 to S125. A helical membrane pass occupies residues P126–A150. A Mg(2+)-binding site is contributed by D132. Residue H133 is the Proton acceptor of the active site. D136 serves as a coordination point for Mg(2+). Residues V151 to M160 are Lumenal-facing. Residues F161–Y179 traverse the membrane as a helical segment. Topologically, residues V180–D190 are cytoplasmic. A helical transmembrane segment spans residues V191–V207. Residues C208 to L222 lie on the Lumenal side of the membrane. Residues P223–L248 form a helical membrane-spanning segment. Topologically, residues S249–L265 are cytoplasmic. A helical membrane pass occupies residues S266 to I281. The Lumenal portion of the chain corresponds to Y282 to N293. The chain crosses the membrane as a helical span at residues P294–H316. Topologically, residues M317–F329 are cytoplasmic. The helical transmembrane segment at I330–Q339 threads the bilayer. Topologically, residues Y340–D346 are lumenal. The chain crosses the membrane as a helical span at residues E347 to H376. Residues L377–D402 are Cytoplasmic-facing.

Belongs to the CDP-alcohol phosphatidyltransferase class-I family. Homodimer. Mg(2+) is required as a cofactor. Mn(2+) serves as cofactor.

It is found in the golgi apparatus membrane. It carries out the reaction CDP-choline + a 1,2-diacyl-sn-glycerol = a 1,2-diacyl-sn-glycero-3-phosphocholine + CMP + H(+). The enzyme catalyses 1,2-dioctanoyl-sn-glycerol + CDP-choline = 1,2-dioctanoyl-sn-glycero-3-phosphocholine + CMP + H(+). It catalyses the reaction 1-octadecanoyl-2-(5Z,8Z,11Z,14Z-eicosatetraenoyl)-sn-glycerol + CDP-choline = 1-octadecanoyl-2-(5Z,8Z,11Z,14Z-eicosatetraenoyl)-sn-glycero-3-phosphocholine + CMP + H(+). The catalysed reaction is 1-hexadecanoyl-2-(9Z-octadecenoyl)-sn-glycerol + CDP-choline = 1-hexadecanoyl-2-(9Z-octadecenoyl)-sn-glycero-3-phosphocholine + CMP + H(+). It carries out the reaction 1-hexadecanoyl-2-(4Z,7Z,10Z,13Z,16Z,19Z-docosahexaenoyl)-sn-glycerol + CDP-choline = 1-hexadecanoyl-2-(4Z,7Z,10Z,13Z,16Z,19Z-docosahexaenoyl)-sn-glycero-3-phosphocholine + CMP + H(+). The protein operates within phospholipid metabolism; phosphatidylcholine biosynthesis; phosphatidylcholine from phosphocholine: step 2/2. Catalyzes the final step of de novo phosphatidylcholine (PC) synthesis, i.e. the transfer of choline phosphate from CDP-choline to the free hydroxyl of a diacylglycerol (DAG), producing a PC. It thereby plays a central role in the formation and maintenance of vesicular membranes. Shows a high preference for CDP-choline over CDP-ethanolamine as substrate. The sequence is that of Cholinephosphotransferase 1 (chpt1) from Xenopus laevis (African clawed frog).